Reading from the N-terminus, the 116-residue chain is uncharacterized protein (116 aa).

The chain crosses the membrane as a helical span at residues 20 to 42 (YLNKYYSVITYFLAFLTKFAILL). The tract at residues 95 to 116 (IEFQSKSSPVPPASESNKGINE) is disordered.

It is found in the membrane. This is an uncharacterized protein from Saccharomyces cerevisiae (strain ATCC 204508 / S288c) (Baker's yeast).